The chain runs to 144 residues: Transcriptional regulator MraZ (144 aa).

2 consecutive SpoVT-AbrB domains span residues 6–48 (TYTP…PTDV) and 77–120 (ADEG…DPVR).

The protein belongs to the MraZ family. As to quaternary structure, forms oligomers.

The protein localises to the cytoplasm. It localises to the nucleoid. The chain is Transcriptional regulator MraZ from Nocardioides sp. (strain ATCC BAA-499 / JS614).